We begin with the raw amino-acid sequence, 1325 residues long: NHS-like protein 3 (1325 aa).

Residues 53–85 are a coiled coil; it reads LEDLHTEAQEGLKILQQEEEDTSSKERNESLEN. 10 disordered regions span residues 68 to 92, 111 to 131, 291 to 348, 368 to 570, 595 to 614, 829 to 891, 935 to 981, 1084 to 1138, 1243 to 1272, and 1293 to 1313; these read QQEE…SGHS, QGST…KRRS, CSAS…KGKC, MSVS…AKTS, QTNT…TTVK, EVNG…MEES, LLST…VSEF, VGED…SSAV, GTKK…ENAT, and SDQV…EQAS. Over residues 296 to 334 the composition is skewed to low complexity; it reads ASKGSMASASPSSSRSGSGTNQAPPTTSPSRSNSQSSET. Residues 335–344 show a composition bias toward polar residues; it reads IVSNSSTISS. Positions 369–378 are enriched in low complexity; sequence SVSSSSSWKS. Over residues 400–412 the composition is skewed to polar residues; it reads VRNSHSFSRSLSV. Over residues 428–447 the composition is skewed to basic and acidic residues; it reads LHHENMQRQREQGDIQDPKD. The segment covering 450-460 has biased composition (polar residues); that stretch reads PNNNEQTNRDI. Residues 515–524 are compositionally biased toward basic and acidic residues; sequence KTRECGENFD. Positions 528–541 are enriched in low complexity; the sequence is SPSSGYSSQSGTPT. Residues 834–850 are compositionally biased toward pro residues; the sequence is SPPPSPPPEHHPPPPPI. Composition is skewed to polar residues over residues 935–948 and 1088–1100; these read LLST…SSPE and QVNN…TEPT. The segment covering 1124–1138 has biased composition (low complexity); that stretch reads KSNSPAKSSSASSAV. Residues 1302–1311 show a composition bias toward polar residues; the sequence is RAQSLGNQEQ.

Functionally, able to directly activate the TNF-NFkappaB signaling pathway. The polypeptide is NHS-like protein 3 (nhsl3) (Danio rerio (Zebrafish)).